A 676-amino-acid chain; its full sequence is Electrogenic aspartate/glutamate antiporter SLC25A12, mitochondrial (676 aa).

An N-acetylalanine modification is found at A2. Residues 2 to 293 (AVKVHTTKRG…TLADIERIAP (292 aa)) form a regulatory N-terminal domain region. At 2 to 328 (AVKVHTTKRG…WLQIAESAYR (327 aa)) the chain is on the mitochondrial intermembrane side. The Ca(2+) site is built by D65, T67, D69, L71, and E76. 4 consecutive EF-hand domains span residues 65-76 (DQTKDGLISYQE), 86-121 (APDS…TIIH), 125-155 (PFNW…QFLQ), and 157-192 (LQLE…IRSH). The tract at residues 294–309 (LAEGALPYNLAELQRQ) is linker loop domain. Residues 319–611 (WLQIAESAYR…RWFYIDFGGL (293 aa)) form a carrier domain region. 3 Solcar repeats span residues 323 to 415 (AESA…VRDK), 423 to 507 (IPLP…CKLL), and 515 to 603 (VGGI…LQRW). A helical transmembrane segment spans residues 329–346 (FTLGSVAGAVGATAVYPI). The Mitochondrial matrix segment spans residues 347–389 (DLVKTRMQNQRGTGSVVGELMYKNSFDCFKKVLRYEGFFGLYR). A helical membrane pass occupies residues 390–409 (GLIPQLIGVAPEKAIKLTVN). Over 410 to 432 (DFVRDKFTRRDGSIPLPAEILAG) the chain is Mitochondrial intermembrane. The chain crosses the membrane as a helical span at residues 433-446 (GCAGGSQVIFTNPL). The Mitochondrial matrix segment spans residues 447 to 481 (EIVKIRLQVAGEITTGPRVSALNVLQDLGLFGLYK). Residues 482–501 (GAKACFLRDIPFSAIYFPVY) form a helical membrane-spanning segment. Over 502 to 520 (AHCKLLLADENGHVGGINL) the chain is Mitochondrial intermembrane. The chain crosses the membrane as a helical span at residues 521-538 (LTAGAMAGVPAASLVTPA). The Mitochondrial matrix portion of the chain corresponds to 539 to 577 (DVIKTRLQVAARAGQTTYSGVIDCFRKILREEGPSAFWK). A helical membrane pass occupies residues 578-597 (GTAARVFRSSPQFGVTLVTY). Over 598–676 (ELLQRWFYID…AQPKVAAAAQ (79 aa)) the chain is Mitochondrial intermembrane. Residues 612–674 (KPSGSEPTPK…AAAQPKVAAA (63 aa)) form a C-terminal domain region.

The protein belongs to the mitochondrial carrier (TC 2.A.29) family. In terms of assembly, homodimer (via N-terminus).

Its subcellular location is the mitochondrion inner membrane. It catalyses the reaction L-aspartate(in) + L-glutamate(out) + H(+)(out) = L-aspartate(out) + L-glutamate(in) + H(+)(in). The enzyme catalyses 3-sulfino-L-alanine(out) + L-glutamate(in) + H(+)(in) = 3-sulfino-L-alanine(in) + L-glutamate(out) + H(+)(out). It carries out the reaction 3-sulfino-L-alanine(out) + L-aspartate(in) = 3-sulfino-L-alanine(in) + L-aspartate(out). L-aspartate and 3-sulfino-L-alanine uptake are both inhibited by glisoxepide. Its function is as follows. Mitochondrial electrogenic aspartate/glutamate antiporter that favors efflux of aspartate and entry of glutamate and proton within the mitochondria as part of the malate-aspartate shuttle. Also mediates the uptake of L-cysteinesulfinate (3-sulfino-L-alanine) by mitochondria in exchange of L-glutamate and proton. Can also exchange L-cysteinesulfinate with aspartate in their anionic form without any proton translocation. Lacks transport activity towards L-glutamine or gamma-aminobutyric acid (GABA). This Rattus norvegicus (Rat) protein is Electrogenic aspartate/glutamate antiporter SLC25A12, mitochondrial.